A 132-amino-acid polypeptide reads, in one-letter code: Small ribosomal subunit protein uS8 (132 aa).

It belongs to the universal ribosomal protein uS8 family. In terms of assembly, part of the 30S ribosomal subunit. Contacts proteins S5 and S12.

One of the primary rRNA binding proteins, it binds directly to 16S rRNA central domain where it helps coordinate assembly of the platform of the 30S subunit. The polypeptide is Small ribosomal subunit protein uS8 (rpsH) (Caldanaerobacter subterraneus subsp. tengcongensis (strain DSM 15242 / JCM 11007 / NBRC 100824 / MB4) (Thermoanaerobacter tengcongensis)).